The primary structure comprises 133 residues: ATP synthase epsilon chain, chloroplastic (133 aa).

The protein belongs to the ATPase epsilon chain family. As to quaternary structure, F-type ATPases have 2 components, CF(1) - the catalytic core - and CF(0) - the membrane proton channel. CF(1) has five subunits: alpha(3), beta(3), gamma(1), delta(1), epsilon(1). CF(0) has three main subunits: a, b and c.

The protein localises to the plastid. The protein resides in the chloroplast thylakoid membrane. In terms of biological role, produces ATP from ADP in the presence of a proton gradient across the membrane. This Lotus japonicus (Lotus corniculatus var. japonicus) protein is ATP synthase epsilon chain, chloroplastic.